A 258-amino-acid chain; its full sequence is Imidazole glycerol phosphate synthase subunit HisF (258 aa).

Catalysis depends on residues Asp11 and Asp130.

The protein belongs to the HisA/HisF family. In terms of assembly, heterodimer of HisH and HisF.

The protein resides in the cytoplasm. It carries out the reaction 5-[(5-phospho-1-deoxy-D-ribulos-1-ylimino)methylamino]-1-(5-phospho-beta-D-ribosyl)imidazole-4-carboxamide + L-glutamine = D-erythro-1-(imidazol-4-yl)glycerol 3-phosphate + 5-amino-1-(5-phospho-beta-D-ribosyl)imidazole-4-carboxamide + L-glutamate + H(+). Its pathway is amino-acid biosynthesis; L-histidine biosynthesis; L-histidine from 5-phospho-alpha-D-ribose 1-diphosphate: step 5/9. Functionally, IGPS catalyzes the conversion of PRFAR and glutamine to IGP, AICAR and glutamate. The HisF subunit catalyzes the cyclization activity that produces IGP and AICAR from PRFAR using the ammonia provided by the HisH subunit. The sequence is that of Imidazole glycerol phosphate synthase subunit HisF from Klebsiella pneumoniae (strain 342).